Consider the following 511-residue polypeptide: Phosphoenolpyruvate carboxylase (511 aa).

Belongs to the PEPCase type 2 family. In terms of assembly, homotetramer. The cofactor is Mg(2+).

It catalyses the reaction oxaloacetate + phosphate = phosphoenolpyruvate + hydrogencarbonate. Functionally, catalyzes the irreversible beta-carboxylation of phosphoenolpyruvate (PEP) to form oxaloacetate (OAA), a four-carbon dicarboxylic acid source for the tricarboxylic acid cycle. The protein is Phosphoenolpyruvate carboxylase of Saccharolobus islandicus (strain M.16.27) (Sulfolobus islandicus).